A 387-amino-acid chain; its full sequence is Phosphoglycerate kinase (387 aa).

Substrate contacts are provided by residues 21–23 (DLN), R36, 59–62 (HLGR), R113, and R146. ATP is bound by residues K197, E314, and 340–343 (GGDT).

The protein belongs to the phosphoglycerate kinase family. Monomer.

Its subcellular location is the cytoplasm. The catalysed reaction is (2R)-3-phosphoglycerate + ATP = (2R)-3-phospho-glyceroyl phosphate + ADP. Its pathway is carbohydrate degradation; glycolysis; pyruvate from D-glyceraldehyde 3-phosphate: step 2/5. In Pseudomonas syringae pv. syringae (strain B728a), this protein is Phosphoglycerate kinase.